The chain runs to 124 residues: Putative membrane protein insertion efficiency factor (124 aa).

This sequence belongs to the UPF0161 family.

The protein resides in the cell inner membrane. In terms of biological role, could be involved in insertion of integral membrane proteins into the membrane. The protein is Putative membrane protein insertion efficiency factor of Psychrobacter cryohalolentis (strain ATCC BAA-1226 / DSM 17306 / VKM B-2378 / K5).